The primary structure comprises 271 residues: MQAACWYVLLLLQPTVYLVTCANLTNGGKSELLKSGNSKSTLKHIWTESSKDLSISRLLSQTFRGKENGTDLDLRYDTPEPYSEQDLWDWLRNSTDLQEPRPRAKRRPIVKTGKFKKMFGWGDFHSNIKTVKLNLLITGKIVDHGNGTFSVYFRHNSTGQGNVSVSLVPPTKIVEFDLAQQTVIDAKDSKSFNCRIEYEKVDKATKNTLCNYDPSKTCYQEQTQSHVSWLCSKPFKVICIYISFYSTDYKLVQKVCPDYNYHSDTPYFPSG.

An N-terminal signal peptide occupies residues 1-21; that stretch reads MQAACWYVLLLLQPTVYLVTC. The tract at residues 22–97 is II; sequence ANLTNGGKSE…WDWLRNSTDL (76 aa). N-linked (GlcNAc...) asparagine glycans are attached at residues N23, N68, N93, N146, N156, and N162. Residues 98 to 176 form an III region; that stretch reads QEPRPRAKRR…LVPPTKIVEF (79 aa). Residues 177–185 form an IV (linker domain) region; that stretch reads DLAQQTVID. The interval 186 to 271 is v (Cys-rich); the sequence is AKDSKSFNCR…HSDTPYFPSG (86 aa).

Belongs to the neurexophilin family. May be proteolytically processed at the boundary between the N-terminal non-conserved and the central conserved domain in neuron-like cells. In terms of tissue distribution, highest level in brain.

The protein resides in the secreted. In terms of biological role, may be signaling molecules that resemble neuropeptides. Ligand for alpha-neurexins. The sequence is that of Neurexophilin-1 (Nxph1) from Rattus norvegicus (Rat).